Consider the following 566-residue polypeptide: Putative UDP-glucuronate:xylan alpha-glucuronosyltransferase 5 (566 aa).

A helical; Signal-anchor for type II membrane protein transmembrane segment spans residues 17–37 (LILISLSFLGLLLNFKPLFLL). Residues Asp372 and Asp374 each coordinate Mn(2+). Residues 372–374 (DAD), 401–403 (NSG), 428–432 (NGGDQ), and 475–480 (HYLGLK) contribute to the substrate site. A Mn(2+)-binding site is contributed by His475.

It belongs to the glycosyltransferase 8 family. Glycogenin subfamily. Mn(2+) is required as a cofactor.

It localises to the golgi apparatus membrane. In terms of biological role, may be involved in the substitutions of the xylan backbone in stem glucuronoxylan. In Arabidopsis thaliana (Mouse-ear cress), this protein is Putative UDP-glucuronate:xylan alpha-glucuronosyltransferase 5 (GUX5).